The primary structure comprises 280 residues: 2-dehydro-3-deoxyphosphooctonate aldolase (280 aa).

It belongs to the KdsA family.

Its subcellular location is the cytoplasm. The catalysed reaction is D-arabinose 5-phosphate + phosphoenolpyruvate + H2O = 3-deoxy-alpha-D-manno-2-octulosonate-8-phosphate + phosphate. Its pathway is carbohydrate biosynthesis; 3-deoxy-D-manno-octulosonate biosynthesis; 3-deoxy-D-manno-octulosonate from D-ribulose 5-phosphate: step 2/3. The protein operates within bacterial outer membrane biogenesis; lipopolysaccharide biosynthesis. In Coxiella burnetii (strain CbuG_Q212) (Coxiella burnetii (strain Q212)), this protein is 2-dehydro-3-deoxyphosphooctonate aldolase.